A 152-amino-acid polypeptide reads, in one-letter code: Siroheme decarboxylase NirD subunit (152 aa).

This sequence belongs to the Ahb/Nir family. Probably forms a complex composed of NirD, NirL, NirG and NirH. All proteins are required for the total conversion of siroheme to didecarboxysiroheme.

It carries out the reaction siroheme + 2 H(+) = 12,18-didecarboxysiroheme + 2 CO2. It functions in the pathway porphyrin-containing compound metabolism. In terms of biological role, involved in heme d1 biosynthesis. Catalyzes the decarboxylation of siroheme into didecarboxysiroheme. This Stutzerimonas stutzeri (Pseudomonas stutzeri) protein is Siroheme decarboxylase NirD subunit.